The chain runs to 554 residues: Dihydroxy-acid dehydratase (554 aa).

D78 serves as a coordination point for Mg(2+). Position 119 (C119) interacts with [2Fe-2S] cluster. Positions 120 and 121 each coordinate Mg(2+). Position 121 is an N6-carboxylysine (K121). A [2Fe-2S] cluster-binding site is contributed by C191. Residue E442 participates in Mg(2+) binding. Catalysis depends on S468, which acts as the Proton acceptor.

The protein belongs to the IlvD/Edd family. Homodimer. The cofactor is [2Fe-2S] cluster. Mg(2+) is required as a cofactor.

The enzyme catalyses (2R)-2,3-dihydroxy-3-methylbutanoate = 3-methyl-2-oxobutanoate + H2O. The catalysed reaction is (2R,3R)-2,3-dihydroxy-3-methylpentanoate = (S)-3-methyl-2-oxopentanoate + H2O. It functions in the pathway amino-acid biosynthesis; L-isoleucine biosynthesis; L-isoleucine from 2-oxobutanoate: step 3/4. It participates in amino-acid biosynthesis; L-valine biosynthesis; L-valine from pyruvate: step 3/4. Its function is as follows. Functions in the biosynthesis of branched-chain amino acids. Catalyzes the dehydration of (2R,3R)-2,3-dihydroxy-3-methylpentanoate (2,3-dihydroxy-3-methylvalerate) into 2-oxo-3-methylpentanoate (2-oxo-3-methylvalerate) and of (2R)-2,3-dihydroxy-3-methylbutanoate (2,3-dihydroxyisovalerate) into 2-oxo-3-methylbutanoate (2-oxoisovalerate), the penultimate precursor to L-isoleucine and L-valine, respectively. This chain is Dihydroxy-acid dehydratase, found in Thermotoga petrophila (strain ATCC BAA-488 / DSM 13995 / JCM 10881 / RKU-1).